Here is a 459-residue protein sequence, read N- to C-terminus: Glutamate--tRNA ligase 2 (459 aa).

Positions 8–18 match the 'HIGH' region motif; that stretch reads PSPTGYIHIGN. The short motif at 249–253 is the 'KMSKS' region element; the sequence is GLSKR. Position 252 (K252) interacts with ATP.

This sequence belongs to the class-I aminoacyl-tRNA synthetase family. Glutamate--tRNA ligase type 1 subfamily. Monomer.

The protein localises to the cytoplasm. The enzyme catalyses tRNA(Glu) + L-glutamate + ATP = L-glutamyl-tRNA(Glu) + AMP + diphosphate. In terms of biological role, catalyzes the attachment of glutamate to tRNA(Glu) in a two-step reaction: glutamate is first activated by ATP to form Glu-AMP and then transferred to the acceptor end of tRNA(Glu). This is Glutamate--tRNA ligase 2 from Bartonella henselae (strain ATCC 49882 / DSM 28221 / CCUG 30454 / Houston 1) (Rochalimaea henselae).